The primary structure comprises 904 residues: HTH-type transcriptional regulator MalT (904 aa).

39-46 (CPAGYGKT) contacts ATP. Positions 832 to 897 (ELIRTSPLTQ…EAVQQAQQLL (66 aa)) constitute an HTH luxR-type domain. The H-T-H motif DNA-binding region spans 856–875 (NDQIAGELAVAATTIKTHIR).

The protein belongs to the MalT family. Monomer in solution. Oligomerizes to an active state in the presence of the positive effectors ATP and maltotriose.

Activated by ATP and maltotriose, which are both required for DNA binding. In terms of biological role, positively regulates the transcription of the maltose regulon whose gene products are responsible for uptake and catabolism of malto-oligosaccharides. Specifically binds to the promoter region of its target genes, recognizing a short DNA motif called the MalT box. This is HTH-type transcriptional regulator MalT from Serratia proteamaculans (strain 568).